A 319-amino-acid chain; its full sequence is Polyprenyl transferase macG (319 aa).

The next 9 helical transmembrane spans lie at 28-45, 48-68, 106-126, 127-147, 152-172, 182-202, 224-244, 249-269, and 289-309; these read AWLC…AAGM, VSLE…SVTA, AVVA…GTLG, PAVM…PFMK, FPQV…WVGI, ALPL…FYAT, VQIL…VTAL, SLIF…WHIL, and LGLY…VYDI.

This sequence belongs to the UbiA prenyltransferase family. Requires Mg(2+) as cofactor.

It localises to the membrane. Its pathway is secondary metabolite biosynthesis; terpenoid biosynthesis. In terms of biological role, polyprenyl transferase; part of the gene cluster that mediates the biosynthesis of macrophorins, isoprenoid epoxycyclohexenones containing cyclized drimane moieties. The first step of the pathway is the synthesis of 6-methylsalicylic acid (6-MSA) by the polyketide synthase macA. 6-MSA is then converted to m-cresol by the decarboxylase macB. The cytochrome P450 monooxygenase macC then catalyzes the oxidation of m-cresol to toluquinol. Epoxidation of toluquinol is then performed by the short chain dehydrogenase macD, with the help of macE, and a further prenylation by macG leads to 7-deacetoxyyanuthone A. The next step is the hydroxylation of C-22 of 7-deacetoxyyanuthone A by the cytochrome P450 monooxygenase macH to yield 22-deacetylyanuthone A. O-Mevalon transferase macI then attaches mevalon to the hydroxyl group of 22-deacetylyanuthone A to produce yanuthone E. The terpene cyclase macJ catalyzes the cyclization of 22-deacetylyanuthone A to macrophorin A. MacJ is also able to catalyze cyclization of yanuthone E and 7-deacetoxyyanuthone A to their corresponding macrophorins. The macJ products can be further modified by macH and macJ, as well as by the FAD-dependent monooxygenase macF, to produce additional macrophorins, including 4'-oxomacrophorin A, 4'-oxomacrophorin D and 4'-oxomacrophorin E. The polypeptide is Polyprenyl transferase macG (Penicillium terrestre).